The chain runs to 121 residues: Ribonuclease P protein component (121 aa).

Belongs to the RnpA family. In terms of assembly, consists of a catalytic RNA component (M1 or rnpB) and a protein subunit.

The enzyme catalyses Endonucleolytic cleavage of RNA, removing 5'-extranucleotides from tRNA precursor.. In terms of biological role, RNaseP catalyzes the removal of the 5'-leader sequence from pre-tRNA to produce the mature 5'-terminus. It can also cleave other RNA substrates such as 4.5S RNA. The protein component plays an auxiliary but essential role in vivo by binding to the 5'-leader sequence and broadening the substrate specificity of the ribozyme. The sequence is that of Ribonuclease P protein component from Desulfosudis oleivorans (strain DSM 6200 / JCM 39069 / Hxd3) (Desulfococcus oleovorans).